Reading from the N-terminus, the 164-residue chain is uncharacterized protein (164 aa).

The span at 1–29 (MLCVRSSSSNLESDTYLSRYSTRASAGTG) shows a compositional bias: polar residues. The disordered stretch occupies residues 1-62 (MLCVRSSSSN…SKPSNNKNID (62 aa)). Residues 43–62 (SSDSSSSSSESKPSNNKNID) show a composition bias toward low complexity.

This is an uncharacterized protein from Schizosaccharomyces pombe (strain 972 / ATCC 24843) (Fission yeast).